Reading from the N-terminus, the 307-residue chain is Probable GTP 3',8-cyclase (307 aa).

Positions 4–222 (ALGREVRSVR…RTFHSREVYR (219 aa)) constitute a Radical SAM core domain. Arg-13 is a binding site for GTP. [4Fe-4S] cluster-binding residues include Cys-20 and Cys-24. Tyr-26 contributes to the S-adenosyl-L-methionine binding site. Position 27 (Cys-27) interacts with [4Fe-4S] cluster. Lys-60 is a GTP binding site. 2 residues coordinate S-adenosyl-L-methionine: Gly-64 and Ser-112. GTP is bound at residue Lys-150. [4Fe-4S] cluster contacts are provided by Cys-240 and Cys-243. Residue 245–247 (RIR) coordinates GTP. [4Fe-4S] cluster is bound at residue Cys-257.

Belongs to the radical SAM superfamily. MoaA family. Requires [4Fe-4S] cluster as cofactor.

The catalysed reaction is GTP + AH2 + S-adenosyl-L-methionine = (8S)-3',8-cyclo-7,8-dihydroguanosine 5'-triphosphate + 5'-deoxyadenosine + L-methionine + A + H(+). It participates in cofactor biosynthesis; molybdopterin biosynthesis. Its function is as follows. Catalyzes the cyclization of GTP to (8S)-3',8-cyclo-7,8-dihydroguanosine 5'-triphosphate. The protein is Probable GTP 3',8-cyclase of Methanopyrus kandleri (strain AV19 / DSM 6324 / JCM 9639 / NBRC 100938).